A 211-amino-acid polypeptide reads, in one-letter code: Prolactin-3C1 (211 aa).

The N-terminal stretch at 1-29 (MQLSLTQARTWKGLLLLVSCMILWISVTP) is a signal peptide. Asn-77 and Asn-173 each carry an N-linked (GlcNAc...) asparagine glycan. The cysteines at positions 80 and 187 are disulfide-linked.

It belongs to the somatotropin/prolactin family. Expressed exclusively in decidual tissue.

The protein localises to the secreted. In Rattus norvegicus (Rat), this protein is Prolactin-3C1 (Prl3c1).